Reading from the N-terminus, the 442-residue chain is MDPNQHNPPAGHQIVHVRGDSETDLEALFNAVMNPKNTIVPPSVPMRLRKLPDSFFTPPEPKSHSRQASTDAGTAGTVTPHHVRAHSSPASLQLGAVSPGALTSMGPANAPPQHLRQSSYEIPDDMPLPPGWEMAKTPSGQRYFLNHNDQTTTWQDPRKALLQMNQAAPASPVPVQQQNIMNPASGPLPDGWEQAITSEGEIYYINHKNKTTSWLDPRLDPRFAMNQQRISQSAPVKQGSQLPSSPQSGVMSGNNPIRLQQIHIEKERLRIKQELLRQRPQELALRNQLPTSMEQDGGTQNPVSSPGMGQDARNMTTNSSDPFLNSGTYHSRDESTDSGLSMSSYSVPRTPDDFLNSVDEMETGDTLGPGSMATQPSRFPDYLDAIPGTDVDLGTLEGESMAVEGEELMPSLQEALSSDILNDMESVLAATKIDKENFLTWL.

Phosphoserine; by LATS1 and LATS2 occurs at positions 21, 69, and 87. Disordered regions lie at residues 51–89 and 97–116; these read LPDS…HSSP and VSPG…QHLR. A Phosphoserine; by LATS1 and LATS2 modification is found at Ser-119. 2 consecutive WW domains span residues 126 to 159 and 186 to 219; these read MPLP…DPRK and GPLP…DPRL. The interval 230 to 254 is disordered; sequence ISQSAPVKQGSQLPSSPQSGVMSGN. The span at 238–249 shows a compositional bias: low complexity; it reads QGSQLPSSPQSG. Residues 247–442 form a transactivation domain region; it reads QSGVMSGNNP…IDKENFLTWL (196 aa). Positions 258 to 279 form a coiled coil; the sequence is RLQQIHIEKERLRIKQELLRQR. The tract at residues 286–374 is disordered; it reads RNQLPTSMEQ…DTLGPGSMAT (89 aa). 3 stretches are compositionally biased toward polar residues: residues 288–304, 313–329, and 337–347; these read QLPT…NPVS, RNMT…SGTY, and DSGLSMSSYSV.

Belongs to the YAP1 family. Post-translationally, phosphorylated by lats1 and lats2; leading to cytoplasmic translocation and inactivation. Expressed in the notochord, brain, eyes, branchial arches and pectoral fins.

It localises to the cytoplasm. It is found in the nucleus. The protein localises to the cell junction. The protein resides in the tight junction. Its subcellular location is the cell membrane. Its function is as follows. Transcriptional regulator which can act both as a coactivator and a corepressor and is the critical downstream regulatory target in the Hippo signaling pathway that plays a pivotal role in organ size control and tumor suppression by restricting proliferation and promoting apoptosis. Required for expansion of the neural plate and neural plate border zone progenitor pools. Acts as a direct regulator of pax3 expression via interaction with tead1. Plays a key role in tissue tension and 3D tissue shape by regulating cortical actomyosin network formation. The sequence is that of Transcriptional coactivator YAP1 (yap1) from Danio rerio (Zebrafish).